We begin with the raw amino-acid sequence, 461 residues long: Asparagine--tRNA ligase (461 aa).

The protein belongs to the class-II aminoacyl-tRNA synthetase family. In terms of assembly, homodimer.

It localises to the cytoplasm. It carries out the reaction tRNA(Asn) + L-asparagine + ATP = L-asparaginyl-tRNA(Asn) + AMP + diphosphate + H(+). The sequence is that of Asparagine--tRNA ligase from Geobacter sulfurreducens (strain ATCC 51573 / DSM 12127 / PCA).